The primary structure comprises 844 residues: E3 ubiquitin-protein ligase BRE1-like 2 (844 aa).

Coiled coils occupy residues 1 to 38 (MDAAALQYENQKLVQQLEAQKSKMRALEGKFKELRDEQ) and 160 to 240 (EDVI…QLQT). Residues 244–269 (SLMNTSAPNGVNGSVSTDKSSDKGMG) are disordered. Positions 245–261 (LMNTSAPNGVNGSVSTD) are enriched in polar residues. Coiled-coil stretches lie at residues 290–604 (ELHE…SEIE) and 640–670 (KMKQAYGSLLAEKNMLQKQLQHVNSSLESSK). Residues 792-831 (CGVCFDRPKEVVITKCFHLFCSPCIQRNLEIRHRKCPGCG) form an RING-type zinc finger.

Belongs to the BRE1 family.

The protein resides in the nucleus. It catalyses the reaction S-ubiquitinyl-[E2 ubiquitin-conjugating enzyme]-L-cysteine + [acceptor protein]-L-lysine = [E2 ubiquitin-conjugating enzyme]-L-cysteine + N(6)-ubiquitinyl-[acceptor protein]-L-lysine.. It participates in protein modification; protein ubiquitination. Its function is as follows. E3 ubiquitin-protein ligase that monoubiquitinates H2B to form H2BK143ub1. H2BK143ub1 gives a specific tag for epigenetic transcriptional activation and is also prerequisite for H3K4me and maybe H3K79me. It thereby plays a central role in histone code and gene regulation. Forms a ubiquitin ligase complex in cooperation with the E2 enzyme UBC2/RAD6. The sequence is that of E3 ubiquitin-protein ligase BRE1-like 2 (BRE1B) from Oryza sativa subsp. indica (Rice).